A 971-amino-acid chain; its full sequence is MADDDPYGTGQMFHLNTALTHSIFNAELYSPEIPLSTDGPYLQILEQPKQRGFRFRYVCEGPSHGGLPGASSEKNKKSYPQVKICNYVGPAKVIVQLVTNGKNIHLHAHSLVGKHCEDGVCTVTAGPKDMVVGFANLGILHVTKKKVFETLEARMTEACIRGYNPGLLVHSDLAYLQAEGGGDRQLTDREKEIIRQAAVQQTKEMDLSVVRLMFTAFLPDSTGSFTRRLEPVVSDAIYDSKAPNASNLKIVRMDRTAGCVTGGEEIYLLCDKVQKDDIQIRFYEEEENGGVWEGFGDFSPTDVHRQFAIVFKTPKYKDVNITKPASVFVQLRRKSDLETSEPKPFLYYPEIKDKEEVQRKRQKLMPNFSDSFGGGSGAGAGGGGMFGSGGGGGSTGSPGPGYGYSNYGFPPYGGITFHPGVTKSNAGVTHGTINTKFKNGPKDCAKSDDEESLTLPEKETEGEGPSLPMACTKTEPIALASTMEDKEQDMGFQDNLFLEKALQLARRHANALFDYAVTGDVKMLLAVQRHLTAVQDENGDSVLHLAIIHLHAQLVRDLLEVTSGLISDDIINMRNDLYQTPLHLAVITKQEDVVEDLLRVGADLSLLDRWGNSVLHLAAKEGHDRILSILLKSRKAAPLIDHPNGEGLNAIHIAVMSNSLPCLLLLVAAGAEVNAQEQKSGRTALHLAVEYDNISLAGCLLLEGDAHVDSTTYDGTTPLHIAAGRGSTRLAALLKAAGADPLVENFEPLYDLDDSWEKAGEDEGVVPGTTPLDMAANWQVFDILNGKPYEPVFTSDDILPQGDMKQLTEDTRLQLCKLLEIPDPDKNWATLAQKLGLGILNNAFRLSPAPSKTLMDNYEVSGGTIKELMEALQQMGYTEAIEVIQAAFRTPATTASSPVTTAQVHCLPLSSSSTRQHIDELRDSDSVCDSGVETSFRKLSFTESLTGDSPLLSLNKMPHGYGQEGPIEGKI.

An RHD domain is found at 40 to 365 (PYLQILEQPK…EVQRKRQKLM (326 aa)). Cysteine 59 is modified (S-nitrosocysteine; alternate). A lipid anchor (S-(15-deoxy-Delta12,14-prostaglandin J2-9-yl)cysteine; alternate) is attached at cysteine 59. Lysine 323 is covalently cross-linked (Glycyl lysine isopeptide (Lys-Gly) (interchain with G-Cter in SUMO2)). Serine 335 carries the phosphoserine; by PKA modification. A Nuclear localization signal motif is present at residues 358 to 363 (QRKRQK). The tract at residues 370-392 (DSFGGGSGAGAGGGGMFGSGGGG) is GRR. The interval 433 to 971 (INTKFKNGPK…GQEGPIEGKI (539 aa)) is interaction with CFLAR. Lysine 438 carries the N6-acetyllysine; by EP300 modification. The segment at 439-470 (NGPKDCAKSDDEESLTLPEKETEGEGPSLPMA) is disordered. At serine 447 the chain carries Phosphoserine. 6 ANK repeats span residues 538–567 (NGDSVLHLAIIHLHAQLVRDLLEVTSGLIS), 577–606 (LYQTPLHLAVITKQEDVVEDLLRVGADLSL), 610–639 (WGNSVLHLAAKEGHDRILSILLKSRKAAPL), 646–675 (EGLNAIHIAVMSNSLPCLLLLVAAGAEVNA), 680–710 (SGRTALHLAVEYDNISLAGCLLLEGDAHVDS), and 714–743 (DGTTPLHIAAGRGSTRLAALLKAAGADPLV). The segment at 646-680 (EGLNAIHIAVMSNSLPCLLLLVAAGAEVNAQEQKS) is essential for interaction with HIF1AN. Residue asparagine 674 is modified to (3S)-3-hydroxyasparagine; by HIF1AN. Serine 755 carries the post-translational modification Phosphoserine. One copy of the ANK 7 repeat lies at 767 to 797 (PGTTPLDMAANWQVFDILNGKPYEPVFTSDD). Positions 801-888 (QGDMKQLTED…EAIEVIQAAF (88 aa)) constitute a Death domain. A Phosphoserine modification is found at serine 896. Serine 910 bears the Phosphoserine; by GSK3-beta; in vitro mark. Serine 926 is modified (phosphoserine). 2 positions are modified to phosphoserine; by IKKB: serine 930 and serine 935. At serine 940 the chain carries Phosphoserine. The residue at position 946 (threonine 946) is a Phosphothreonine.

Component of the NF-kappa-B p65-p50 complex. Homodimer; component of the NF-kappa-B p50-p50 complex. Component of the NF-kappa-B p105-p50 complex. Component of the NF-kappa-B p50-c-Rel complex. Component of a complex consisting of the NF-kappa-B p50-p50 homodimer and BCL3. Also interacts with MAP3K8. NF-kappa-B p50 subunit interacts with NCOA3 coactivator, which may coactivate NF-kappa-B dependent expression via its histone acetyltransferase activity. Interacts with TSC22D3; this interaction prevents nuclear translocation and DNA-binding. Interacts with SPAG9 and UNC5CL. NFKB1/p105 interacts with CFLAR; the interaction inhibits p105 processing into p50. NFKB1/p105 forms a ternary complex with MAP3K8 and TNIP2. Interacts with GSK3B; the interaction prevents processing of p105 to p50. NFKB1/p50 interacts with NFKBIE. NFKB1/p50 interacts with NFKBIZ. Nuclear factor NF-kappa-B p50 subunit interacts with NFKBID. Directly interacts with MEN1. Interacts with HIF1AN. Interacts with FEM1AA; interaction is direct. In terms of processing, generation of the NF-kappa-B p50 (Nuclear factor NF-kappa-B p50 subunit) transcription factor takes place both cotranslationally and post-translationally via non-mutually exclusive mechanisms. A cotranslational processing allows the production of both p50 and p105 (Nuclear factor NF-kappa-B p105 subunit) from a single NFKB1 mRNA. While translation occurs, the particular unfolded structure after the GRR repeat region acts as a substrate for the proteasome, promoting degradation of the C-terminus. The GRR acts as a proteasomal 'stop signal', protecting the region upstream of the GRR from degradation and promoting generation of p50. It is unclear if limited proteasome degradation during cotranslational processing depends on ubiquitination. NF-kappa-B p50 is also generated post-translationally following ubiquitination by the KPC complex, leading to limited processing by the proteasome downstream of the GRR region, thereby generating p50. Phosphorylation at the C-terminus by IKBKB/IKKB acts as a signal for ubiquitination and promotes either complete degradation or processing to generate the NF-kappa-B p50 (Nuclear factor NF-kappa-B p50 subunit). Phosphorylation at Ser-910 primes p105 for proteolytic processing in response to TNF-alpha stimulation. Phosphorylation at Ser-926, Ser-930 and Ser-935 are required for BTRC/BTRCP-mediated ubiquitination and proteolysis. Phosphorylation at Ser-930 is also required for ubiquitination by the KPC complex and limited processing to generate NF-kappa-B p50 (Nuclear factor NF-kappa-B p50 subunit). Post-translationally, polyubiquitinated at multiple Lys residues in the C-terminus. Polyubiquitinated by the SCF(FBXW11) and SCF(BTRC) complexes following phosphorylation at Ser-926, Ser-930 and Ser-935, leading to its complete degradation. In contrast, polyubiquitination by the KPC complex following phosphorylation at Ser-930 leads to limited proteosomal processing and generation of the active NF-kappa-B p50 (Nuclear factor NF-kappa-B p50 subunit). In terms of processing, S-nitrosylation of Cys-59 affects DNA binding. The covalent modification of cysteine by 15-deoxy-Delta12,14-prostaglandin-J2 is autocatalytic and reversible. It may occur as an alternative to other cysteine modifications, such as S-nitrosylation and S-palmitoylation.

The protein localises to the cytoplasm. It localises to the nucleus. NF-kappa-B is a pleiotropic transcription factor present in almost all cell types and is the endpoint of a series of signal transduction events that are initiated by a vast array of stimuli related to many biological processes such as inflammation, immunity, differentiation, cell growth, tumorigenesis and apoptosis. NF-kappa-B is a homo- or heterodimeric complex formed by the Rel-like domain-containing proteins RELA/p65, RELB, NFKB1/p105, NFKB1/p50, REL and NFKB2/p52 and the heterodimeric p65-p50 complex appears to be most abundant one. The dimers bind at kappa-B sites in the DNA of their target genes and the individual dimers have distinct preferences for different kappa-B sites that they can bind with distinguishable affinity and specificity. Different dimer combinations act as transcriptional activators or repressors, respectively. NF-kappa-B is controlled by various mechanisms of post-translational modification and subcellular compartmentalization as well as by interactions with other cofactors or corepressors. NF-kappa-B complexes are held in the cytoplasm in an inactive state complexed with members of the NF-kappa-B inhibitor (I-kappa-B) family. In a conventional activation pathway, I-kappa-B is phosphorylated by I-kappa-B kinases (IKKs) in response to different activators, subsequently degraded thus liberating the active NF-kappa-B complex which translocates to the nucleus. NF-kappa-B heterodimeric p65-p50 and RelB-p50 complexes are transcriptional activators. The NF-kappa-B p50-p50 homodimer is a transcriptional repressor, but can act as a transcriptional activator when associated with BCL3. NFKB1 appears to have dual functions such as cytoplasmic retention of attached NF-kappa-B proteins by p105 and generation of p50 by a cotranslational processing. The proteasome-mediated process ensures the production of both p50 and p105 and preserves their independent function, although processing of NFKB1/p105 also appears to occur post-translationally. p50 binds to the kappa-B consensus sequence 5'-GGRNNYYCC-3', located in the enhancer region of genes involved in immune response and acute phase reactions. Plays a role in the regulation of apoptosis. In a complex with MAP3K8, NFKB1/p105 represses MAP3K8-induced MAPK signaling; active MAP3K8 is released by proteasome-dependent degradation of NFKB1/p105. Functionally, P105 is the precursor of the active p50 subunit (Nuclear factor NF-kappa-B p50 subunit) of the nuclear factor NF-kappa-B. Acts as a cytoplasmic retention of attached NF-kappa-B proteins by p105. In terms of biological role, constitutes the active form, which associates with RELA/p65 to form the NF-kappa-B p65-p50 complex to form a transcription factor. Together with RELA/p65, binds to the kappa-B consensus sequence 5'-GGRNNYYCC-3', located in the enhancer region of genes involved in immune response and acute phase reactions. Its function is as follows. Isoform 3 (p98) (but not p84 or p105) acts as a transactivator of NF-kappa-B-regulated gene expression. Acts as an inhibitor of transactivation of p50 NF-kappa-B subunit, probably by sequestering it in the cytoplasm. The polypeptide is Nuclear factor NF-kappa-B p105 subunit (Nfkb1) (Mus musculus (Mouse)).